A 47-amino-acid chain; its full sequence is Cytochrome b559 subunit beta (47 aa).

Residues 22-38 (WLAVHTLAIPTVFFLGA) form a helical membrane-spanning segment. Heme is bound at residue His-26.

Belongs to the PsbE/PsbF family. Heterodimer of an alpha subunit and a beta subunit. PSII is composed of 1 copy each of membrane proteins PsbA, PsbB, PsbC, PsbD, PsbE, PsbF, PsbH, PsbI, PsbJ, PsbK, PsbL, PsbM, PsbT, PsbX, PsbY, PsbZ, Psb30/Ycf12, peripheral proteins PsbO, CyanoQ (PsbQ), PsbU, PsbV and a large number of cofactors. It forms dimeric complexes. The cofactor is heme b.

The protein localises to the cellular thylakoid membrane. In terms of biological role, this b-type cytochrome is tightly associated with the reaction center of photosystem II (PSII). PSII is a light-driven water:plastoquinone oxidoreductase that uses light energy to abstract electrons from H(2)O, generating O(2) and a proton gradient subsequently used for ATP formation. It consists of a core antenna complex that captures photons, and an electron transfer chain that converts photonic excitation into a charge separation. This is Cytochrome b559 subunit beta from Synechococcus sp. (strain JA-3-3Ab) (Cyanobacteria bacterium Yellowstone A-Prime).